The primary structure comprises 53 residues: ATP synthase protein 8 (53 aa).

A helical transmembrane segment spans residues Trp-9–Phe-29.

It belongs to the ATPase protein 8 family. In terms of assembly, F-type ATPases have 2 components, CF(1) - the catalytic core - and CF(0) - the membrane proton channel.

It localises to the mitochondrion membrane. In terms of biological role, mitochondrial membrane ATP synthase (F(1)F(0) ATP synthase or Complex V) produces ATP from ADP in the presence of a proton gradient across the membrane which is generated by electron transport complexes of the respiratory chain. F-type ATPases consist of two structural domains, F(1) - containing the extramembraneous catalytic core and F(0) - containing the membrane proton channel, linked together by a central stalk and a peripheral stalk. During catalysis, ATP synthesis in the catalytic domain of F(1) is coupled via a rotary mechanism of the central stalk subunits to proton translocation. Part of the complex F(0) domain. Minor subunit located with subunit a in the membrane. This is ATP synthase protein 8 (mt:ATPase8) from Bombyx mori (Silk moth).